The chain runs to 379 residues: Stimulator of interferon genes protein (379 aa).

A run of 3 helical transmembrane segments spans residues 20 to 40, 87 to 107, and 115 to 135; these read VAAF…GEPS, ACLG…YFYV, and LPLT…ILLG. S-palmitoyl cysteine attachment occurs at residues Cys-88 and Cys-91. Residues 153-340 are cyclic dinucleotide-binding domain (CBD); the sequence is FNVAHGLAWS…KHLRQEEREE (188 aa). Residues Ser-162, Tyr-167, Arg-238, and Thr-263 each contribute to the 2',3'-cGAMP site. 3',3'-c-di-GMP-binding positions include Ser-162, Tyr-167, 238–241, and Thr-263; that span reads RVYT. Residues Tyr-167, Arg-238, and Thr-263 each contribute to the 2',3'-cUAMP site. Residues 340 to 379 form a C-terminal tail (CTT) region; it reads EVTMGTAGTFVAPGSSTLHQEPELLISGMDQPLPLRTDIF. Residue Ser-355 is modified to Phosphoserine. Thr-356 is subject to Phosphothreonine. The pLxIS motif motif lies at 363–366; that stretch reads LLIS. Residue Ser-366 is modified to Phosphoserine; by TBK1.

This sequence belongs to the STING family. In terms of assembly, homodimer; forms a homodimer in absence of cyclic nucleotide (c-di-GMP or cGAMP). Homotetramer; in presence of cyclic nucleotide (c-di-GMP or cGAMP), forms tetramers and higher-order oligomers through side-by-side packing. Interacts (when phosphorylated) with IRF3; following activation and phosphorylation on the pLxIS motif by TBK1, recruits IRF3. Interacts with TBK1; when homodimer, leading to subsequent production of IFN-beta. Interacts (via transmembrane domain) with TMEM203. In terms of processing, phosphorylation by TBK1 leads to activation and production of IFN-beta. Following cyclic nucleotide (c-di-GMP or cGAMP)-binding, activation and translocation from the endoplasmic reticulum, STING1 is phosphorylated by TBK1 at Ser-366 in the pLxIS motif. The phosphorylated pLxIS motif constitutes an IRF3-binding motif, leading to recruitment of the transcription factor IRF3 to induce type-I interferons and other cytokines. In contrast, lacks phosphorylation site at position 358, leading to reduced production of type-I interferons and other cytokines.

It localises to the endoplasmic reticulum membrane. The protein resides in the cytoplasm. Its subcellular location is the perinuclear region. The protein localises to the endoplasmic reticulum-Golgi intermediate compartment membrane. It is found in the golgi apparatus membrane. It localises to the cytoplasmic vesicle. The protein resides in the autophagosome membrane. Its subcellular location is the mitochondrion outer membrane. The protein localises to the cell membrane. It catalyses the reaction H(+)(in) = H(+)(out). Facilitator of innate immune signaling that acts as a sensor of cytosolic DNA from bacteria and viruses and promotes low production of type I interferon (IFN-alpha and IFN-beta). Compared to other mammals, STING1-dependent type I interferon induction is strongly reduced in bats, suggesting that the cGAS-STING pathway promotes a limited inflammatory response. Innate immune response is triggered in response to non-CpG double-stranded DNA from viruses and bacteria delivered to the cytoplasm. Acts by binding cyclic dinucleotides: recognizes and binds cyclic di-GMP (c-di-GMP), a second messenger produced by bacteria, cyclic UMP-AMP (2',3'-cUAMP), and cyclic GMP-AMP (cGAMP), a messenger produced by CGAS in response to DNA virus in the cytosol. Upon binding to c-di-GMP, cUAMP or cGAMP, STING1 oligomerizes, translocates from the endoplasmic reticulum and is phosphorylated by TBK1 on the pLxIS motif, leading to recruitment and subsequent activation of the transcription factor IRF3 to induce expression of type I interferon and exert a potent anti-viral state. In addition to promote the production of type I interferons, plays a direct role in autophagy. Following cGAMP-binding, STING1 buds from the endoplasmic reticulum into COPII vesicles, which then form the endoplasmic reticulum-Golgi intermediate compartment (ERGIC). The ERGIC serves as the membrane source for WIPI2 recruitment and LC3 lipidation, leading to formation of autophagosomes that target cytosolic DNA or DNA viruses for degradation by the lysosome. Promotes autophagy by acting as a proton channel that directs proton efflux from the Golgi to facilitate MAP1LC3B/LC3B lipidation. The autophagy- and interferon-inducing activities can be uncoupled and autophagy induction is independent of TBK1 phosphorylation. This is Stimulator of interferon genes protein from Eidolon helvum (Straw-colored fruit bat).